The following is a 236-amino-acid chain: MTKRYWNITFEEMMEAGVHFGHGTRKWNPKMAPYISMKRKGIHIINLTRTARFLSEACDLVFDAASRGKRFLIVGTKKKAADLVARAAIRARCHYVNKKWLGGMLTNWYTTETRLRKFRELRTEQKTGKLNCLPKRDAAILKRQLSHLETYLGGIKYMTGLPDIVIIVDQQEEYTALRECITLGIPTICLIDTNCDPDLADISIPANDDAIASIRLILNKLVFAICEGHSSYIRNF.

Belongs to the universal ribosomal protein uS2 family.

Its subcellular location is the plastid. The protein resides in the chloroplast. The chain is Small ribosomal subunit protein uS2c (rps2) from Lotus japonicus (Lotus corniculatus var. japonicus).